We begin with the raw amino-acid sequence, 231 residues long: Probable intron-encoded endonuclease 1 (231 aa).

Belongs to the LAGLIDADG endonuclease family.

Its subcellular location is the mitochondrion. Functionally, endonuclease involved in mitochondrial 21S rRNA gene intron homing. In Wickerhamomyces canadensis (Yeast), this protein is Probable intron-encoded endonuclease 1.